The following is a 433-amino-acid chain: Phosphomethylpyrimidine synthase (433 aa).

Residues asparagine 68, methionine 97, tyrosine 126, histidine 162, 184-186 (SRG), 225-228 (DALR), and glutamate 264 each bind substrate. Residue histidine 268 coordinates Zn(2+). Tyrosine 291 contributes to the substrate binding site. Zn(2+) is bound at residue histidine 332. Residues cysteine 408, cysteine 411, and cysteine 415 each coordinate [4Fe-4S] cluster.

The protein belongs to the ThiC family. Requires [4Fe-4S] cluster as cofactor.

It carries out the reaction 5-amino-1-(5-phospho-beta-D-ribosyl)imidazole + S-adenosyl-L-methionine = 4-amino-2-methyl-5-(phosphooxymethyl)pyrimidine + CO + 5'-deoxyadenosine + formate + L-methionine + 3 H(+). It functions in the pathway cofactor biosynthesis; thiamine diphosphate biosynthesis. Catalyzes the synthesis of the hydroxymethylpyrimidine phosphate (HMP-P) moiety of thiamine from aminoimidazole ribotide (AIR) in a radical S-adenosyl-L-methionine (SAM)-dependent reaction. The polypeptide is Phosphomethylpyrimidine synthase (Fusobacterium nucleatum subsp. nucleatum (strain ATCC 25586 / DSM 15643 / BCRC 10681 / CIP 101130 / JCM 8532 / KCTC 2640 / LMG 13131 / VPI 4355)).